A 190-amino-acid polypeptide reads, in one-letter code: Biphenyl-2,3-diol 1,2-dioxygenase 3 (190 aa).

The 120-residue stretch at 6-125 folds into the VOC domain; that stretch reads RLAHFVLQTN…DGNMVELQID (120 aa). The Fe cation site is built by His9, His73, and Glu121.

Belongs to the extradiol ring-cleavage dioxygenase family. As to quaternary structure, homohexamer. Requires Fe(2+) as cofactor.

The enzyme catalyses biphenyl-2,3-diol + O2 = 2-hydroxy-6-oxo-6-phenylhexa-2,4-dienoate + H(+). It functions in the pathway xenobiotic degradation; biphenyl degradation; 2-hydroxy-2,4-pentadienoate and benzoate from biphenyl: step 3/4. The polypeptide is Biphenyl-2,3-diol 1,2-dioxygenase 3 (bphC3) (Rhodococcus globerulus).